Here is a 177-residue protein sequence, read N- to C-terminus: Protein SPMIP1 (177 aa).

Positions 47–80 (SRLPRKLPTLLPQASVAPPPPASKTTPSKAPSPA) are disordered.

The chain is Protein SPMIP1 (Spmip1) from Mus musculus (Mouse).